We begin with the raw amino-acid sequence, 185 residues long: MATTNDLKNGMVLNLDGELWAVVEFQHVKPGKGGAFVRTTLKNVLSGKVVDKTFNAGTKVDTATVDKRTMQYLYADGEDYVFMDLETFDQITVLGDTVGEAANYLLPEAEAVVATHESVPLYVELPTSVVLEVTYTEPGLQGDRSTGGSKPATVETGATVQVPLFITTGEKIKVDTRDGRYLGRA.

It belongs to the elongation factor P family.

It localises to the cytoplasm. It functions in the pathway protein biosynthesis; polypeptide chain elongation. Its function is as follows. Involved in peptide bond synthesis. Stimulates efficient translation and peptide-bond synthesis on native or reconstituted 70S ribosomes in vitro. Probably functions indirectly by altering the affinity of the ribosome for aminoacyl-tRNA, thus increasing their reactivity as acceptors for peptidyl transferase. The protein is Elongation factor P of Salinispora arenicola (strain CNS-205).